Here is a 466-residue protein sequence, read N- to C-terminus: VGFKAGVKEYKLTYYTPEYETKDTDILAAFRVTPQPGVPPEEAGAAVAAESSTGTWTTVWTDGLTSLDRYKGRCYNIEPVAGETDQYICYVAYPLDLFEEGSVTNMFTSIVGNVFGFKALRALRLEDLRIPTAYVKTFQGPPHGIQVERDKLNKYGRPLLGCTIKPKLGLSAKNYGRACYECLRGGLDFTKDDENVNSQPFMRWRDRFLFCAEAIYKSQAETGEIKGHYLNATAGTCEEMMKRAVFARELGVPIIMFDYLTGGFTANTSLAHYCRDNGLLLHIHRAMHAVIDRQKNHGMHFRVLAKALRMSGGDHIHAGTVVGKLEGERDITLGFVDLLRDDFIEKDRSRGIYFTQDWVSLPGVIPVASGGIHVWHMPALTEIFGDDSVLQFGGGTLGHPWGNAPGAVANRVALEACVQARNEGRDLAAEGNAIIREASKWSPELAAACEVWKEIKFEFKAVDTLD.

The residue at position 4 (Lys-4) is an N6,N6,N6-trimethyllysine. Asn-113 and Thr-163 together coordinate substrate. Lys-165 acts as the Proton acceptor in catalysis. A substrate-binding site is contributed by Lys-167. Residues Lys-191, Asp-193, and Glu-194 each contribute to the Mg(2+) site. Lys-191 is modified (N6-carboxylysine). His-284 functions as the Proton acceptor in the catalytic mechanism. Arg-285, His-317, and Ser-369 together coordinate substrate.

This sequence belongs to the RuBisCO large chain family. Type I subfamily. In terms of assembly, heterohexadecamer of 8 large chains and 8 small chains; disulfide-linked. The disulfide link is formed within the large subunit homodimers. Requires Mg(2+) as cofactor. In terms of processing, the disulfide bond which can form in the large chain dimeric partners within the hexadecamer appears to be associated with oxidative stress and protein turnover.

It is found in the plastid. The protein resides in the chloroplast. The catalysed reaction is 2 (2R)-3-phosphoglycerate + 2 H(+) = D-ribulose 1,5-bisphosphate + CO2 + H2O. The enzyme catalyses D-ribulose 1,5-bisphosphate + O2 = 2-phosphoglycolate + (2R)-3-phosphoglycerate + 2 H(+). Functionally, ruBisCO catalyzes two reactions: the carboxylation of D-ribulose 1,5-bisphosphate, the primary event in carbon dioxide fixation, as well as the oxidative fragmentation of the pentose substrate in the photorespiration process. Both reactions occur simultaneously and in competition at the same active site. The chain is Ribulose bisphosphate carboxylase large chain from Barleria prionitis (Porcupine flower).